A 301-amino-acid polypeptide reads, in one-letter code: Glycine--tRNA ligase alpha subunit (301 aa).

It belongs to the class-II aminoacyl-tRNA synthetase family. As to quaternary structure, tetramer of two alpha and two beta subunits.

It localises to the cytoplasm. The catalysed reaction is tRNA(Gly) + glycine + ATP = glycyl-tRNA(Gly) + AMP + diphosphate. In Proteus mirabilis (strain HI4320), this protein is Glycine--tRNA ligase alpha subunit.